Reading from the N-terminus, the 76-residue chain is ATP synthase subunit c (76 aa).

2 helical membrane-spanning segments follow: residues 8–28 and 55–75; these read LLAAGLAMGLGAIGPGIGVGI and VAFAESIAIFALVISIVLIFV.

This sequence belongs to the ATPase C chain family. F-type ATPases have 2 components, F(1) - the catalytic core - and F(0) - the membrane proton channel. F(1) has five subunits: alpha(3), beta(3), gamma(1), delta(1), epsilon(1). F(0) has three main subunits: a(1), b(2) and c(10-14). The alpha and beta chains form an alternating ring which encloses part of the gamma chain. F(1) is attached to F(0) by a central stalk formed by the gamma and epsilon chains, while a peripheral stalk is formed by the delta and b chains.

It is found in the cell membrane. In terms of biological role, f(1)F(0) ATP synthase produces ATP from ADP in the presence of a proton or sodium gradient. F-type ATPases consist of two structural domains, F(1) containing the extramembraneous catalytic core and F(0) containing the membrane proton channel, linked together by a central stalk and a peripheral stalk. During catalysis, ATP synthesis in the catalytic domain of F(1) is coupled via a rotary mechanism of the central stalk subunits to proton translocation. Its function is as follows. Key component of the F(0) channel; it plays a direct role in translocation across the membrane. A homomeric c-ring of between 10-14 subunits forms the central stalk rotor element with the F(1) delta and epsilon subunits. This is ATP synthase subunit c from Dehalococcoides mccartyi (strain ATCC BAA-2266 / KCTC 15142 / 195) (Dehalococcoides ethenogenes (strain 195)).